Consider the following 416-residue polypeptide: Probable glucan 1,3-beta-glucosidase A (416 aa).

Positions 1–22 (MFVESAKKALLALSLLAASAQA) are cleaved as a signal peptide. Residue Asn-183 is glycosylated (N-linked (GlcNAc...) asparagine). Glu-210 serves as the catalytic Proton donor. Cystine bridges form between Cys-290–Cys-415 and Cys-316–Cys-342. Catalysis depends on Glu-308, which acts as the Nucleophile.

The protein belongs to the glycosyl hydrolase 5 (cellulase A) family. As to quaternary structure, monomer. Requires Mn(2+) as cofactor.

The protein resides in the secreted. It catalyses the reaction Successive hydrolysis of beta-D-glucose units from the non-reducing ends of (1-&gt;3)-beta-D-glucans, releasing alpha-glucose.. Beta-glucanases participate in the metabolism of beta-glucan, the main structural component of the cell wall. It could also function biosynthetically as a transglycosylase. This chain is Probable glucan 1,3-beta-glucosidase A (exgA), found in Aspergillus niger (strain ATCC MYA-4892 / CBS 513.88 / FGSC A1513).